A 300-amino-acid chain; its full sequence is F-box/LRR-repeat protein 15 (300 aa).

The residue at position 1 (methionine 1) is an N-acetylmethionine. The F-box domain maps to 19–66; it reads LLDLPWEDVLLPHVLNWVPLRQLLRLQRVSRAFRALVQLHLARLRRFD. Residues 113-269 form an interaction with SMURF1 region; the sequence is NPQLRSVALA…EPSLSRLRKR (157 aa). LRR repeat units follow at residues 141–162, 167–188, 194–215, 220–241, and 246–267; these read RLQR…RGLA, ALEE…VYLA, GLRS…QELA, QLEH…RTLA, and ALRS…SRLR.

The protein belongs to the FBXL15 family. Part of the SCF (SKP1-CUL1-F-box) E3 ubiquitin-protein ligase complex SCF(FBXL15) composed of CUL1, SKP1, RBX1 and FBXL15.

The protein resides in the cytoplasm. It participates in protein modification; protein ubiquitination. Its function is as follows. Substrate recognition component of a SCF (SKP1-CUL1-F-box protein) E3 ubiquitin-protein ligase complex which mediates the ubiquitination and subsequent proteasomal degradation of SMURF1, thereby acting as a positive regulator of the BMP signaling pathway. Required for dorsal/ventral pattern formation. Also mediates ubiquitination of SMURF2 and WWP2. Required for bone mass maintenance. This is F-box/LRR-repeat protein 15 (Fbxl15) from Rattus norvegicus (Rat).